The primary structure comprises 299 residues: Oxygen-dependent coproporphyrinogen-III oxidase (299 aa).

Position 92 (S92) interacts with substrate. Residues H96 and H106 each coordinate Mn(2+). H106 functions as the Proton donor in the catalytic mechanism. Residue 108–110 (NVR) participates in substrate binding. H145 and H175 together coordinate Mn(2+). The tract at residues 240–275 (YVEFNLVWDRGTLFGLQTGGRTESILMSMPPLVRWE) is important for dimerization. Residue 258–260 (GGR) coordinates substrate.

Belongs to the aerobic coproporphyrinogen-III oxidase family. Homodimer. Mn(2+) serves as cofactor.

The protein resides in the cytoplasm. The enzyme catalyses coproporphyrinogen III + O2 + 2 H(+) = protoporphyrinogen IX + 2 CO2 + 2 H2O. It functions in the pathway porphyrin-containing compound metabolism; protoporphyrin-IX biosynthesis; protoporphyrinogen-IX from coproporphyrinogen-III (O2 route): step 1/1. Involved in the heme biosynthesis. Catalyzes the aerobic oxidative decarboxylation of propionate groups of rings A and B of coproporphyrinogen-III to yield the vinyl groups in protoporphyrinogen-IX. This Escherichia coli O127:H6 (strain E2348/69 / EPEC) protein is Oxygen-dependent coproporphyrinogen-III oxidase.